A 545-amino-acid chain; its full sequence is Chaperonin GroEL (545 aa).

ATP is bound by residues 30-33 (TLGP), Lys-51, 87-91 (DGTTT), Gly-415, and Asp-496. Residues 526-545 (PEPKAPAGGMPDMGGMGGMM) are disordered. Residues 536–545 (PDMGGMGGMM) show a composition bias toward gly residues.

Belongs to the chaperonin (HSP60) family. In terms of assembly, forms a cylinder of 14 subunits composed of two heptameric rings stacked back-to-back. Interacts with the co-chaperonin GroES.

The protein localises to the cytoplasm. It carries out the reaction ATP + H2O + a folded polypeptide = ADP + phosphate + an unfolded polypeptide.. Together with its co-chaperonin GroES, plays an essential role in assisting protein folding. The GroEL-GroES system forms a nano-cage that allows encapsulation of the non-native substrate proteins and provides a physical environment optimized to promote and accelerate protein folding. This chain is Chaperonin GroEL, found in Paracoccus denitrificans (strain Pd 1222).